The following is a 218-amino-acid chain: Small ribosomal subunit protein uS3 (218 aa).

The region spanning 38–106 (VREYINKRLQ…RVHINIVEIK (69 aa)) is the KH type-2 domain.

It belongs to the universal ribosomal protein uS3 family. Part of the 30S ribosomal subunit. Forms a tight complex with proteins S10 and S14.

Binds the lower part of the 30S subunit head. Binds mRNA in the 70S ribosome, positioning it for translation. This Geobacillus thermodenitrificans (strain NG80-2) protein is Small ribosomal subunit protein uS3.